The sequence spans 157 residues: Endoribonuclease YbeY (157 aa).

The Zn(2+) site is built by H114, H118, and H124.

Belongs to the endoribonuclease YbeY family. The cofactor is Zn(2+).

Its subcellular location is the cytoplasm. Its function is as follows. Single strand-specific metallo-endoribonuclease involved in late-stage 70S ribosome quality control and in maturation of the 3' terminus of the 16S rRNA. The sequence is that of Endoribonuclease YbeY from Yersinia enterocolitica serotype O:8 / biotype 1B (strain NCTC 13174 / 8081).